Reading from the N-terminus, the 915-residue chain is Coronin-7 (915 aa).

WD repeat units follow at residues 75-115 (CHSD…QALP), 124-163 (PEDA…PLTE), 166-205 (THGD…EAAQ), and 209-253 (AHEN…AALT). The segment at 396–456 (TSCLAPPAEL…TSPSQRSLQS (61 aa)) is disordered. Composition is skewed to low complexity over residues 399 to 413 (LAPP…AQPA) and 420 to 450 (SSTP…TSPS). A phosphoserine mark is found at serine 453 and serine 456. Residue lysine 463 forms a Glycyl lysine isopeptide (Lys-Gly) (interchain with G-Cter in ubiquitin) linkage. WD repeat units lie at residues 533–573 (QNGV…LQEV), 583–623 (GHTE…EQLR), 626–665 (GHRD…EPLQ), and 719–759 (DVAP…PFFL). Residues 850 to 915 (PPGMTPVSQA…FEGVDEDEWD (66 aa)) are disordered. A compositionally biased stretch (low complexity) spans 859 to 869 (APREAPARRAP). Residues 874–886 (LEEKSDQQKKEEL) show a composition bias toward basic and acidic residues. Residue serine 905 is modified to Phosphoserine.

Belongs to the WD repeat coronin family. As to quaternary structure, interacts with clathrin adapter AP1 complex. This interaction takes place at Golgi membranes and not AP1-positive endosomal membranes. Interacts (when ubiquitinated at Lys-463) with EPS15. The membrane-associated form is phosphorylated on tyrosine residues. Post-translationally, ubiquitinated via 'Lys-33'-linked ubiquitin chains by the BCR(KLHL20) E3 ubiquitin ligase complex: 'Lys-33'-linked ubiquitination promotes interaction with EPS15 and facilitates actin polymerization at the trans-Golgi network, thereby facilitating post-Golgi trafficking. Deubiquitinated by ZRANB1/TRABID.

The protein resides in the golgi apparatus membrane. Its subcellular location is the golgi apparatus. It is found in the trans-Golgi network. The protein localises to the cytoplasmic vesicle. It localises to the cytoplasm. The protein resides in the cytosol. In terms of biological role, F-actin regulator involved in anterograde Golgi to endosome transport: upon ubiquitination via 'Lys-33'-linked ubiquitin chains by the BCR(KLHL20) E3 ubiquitin ligase complex, interacts with EPS15 and localizes to the trans-Golgi network, where it promotes actin polymerization, thereby facilitating post-Golgi trafficking. May play a role in the maintenance of the Golgi apparatus morphology. The protein is Coronin-7 (CORO7) of Bos taurus (Bovine).